Reading from the N-terminus, the 500-residue chain is MDTLLKTPNKLEFLHPVHGFSVKASSFNSVKPHKFGSRKICENWGKGVCVKAKSSALLELVPETKKENLDFELPMYDPSKGLVVDLAVVGGGPAGLAVAQQVSEAGLSVVSIDPSPKLIWPNNYGVWVDEFEAMDLLDCLDATWSGTVVYIDDNTTKDLDRPYGRVNRKQLKSKMMQKCILNGVKFHHAKVIKVIHEEAKSMLICNDGVTIQATVVLDATGFSRCLVQYDKPYKPGYQVAYGILAEVEEHPFDTSKMVLMDWRDSHLGNNMELKERNRKVPTFLYAMPFSSNKIFLEETSLVARPGLRMDDIQERMVARLNHLGIKVKSIEEDEHCVIPMGGSLPVIPQRVVGTGGTAGLVHPSTGYMVARTLAAAPVVANAIIHYLGSEKDLLGNELSAAVWKDLWPIERRRQREFFCFGMDILLKLDLPATRRFFDAFFDLEPRYWHGFLSSRLYLPELIFFGLSLFSRASNTSRIEIMTKGTLPLVNMINNLLQDTE.

The transit peptide at methionine 1–glycine 81 directs the protein to the chloroplast. NAD(+) is bound at residue leucine 86–proline 114.

The protein belongs to the lycopene cyclase family.

It localises to the plastid. The protein localises to the chloroplast. It catalyses the reaction a carotenoid psi-end group = a carotenoid beta-end derivative. Its pathway is carotenoid biosynthesis; beta-carotene biosynthesis. The protein operates within carotenoid biosynthesis; beta-zeacarotene biosynthesis. Catalyzes the double cyclization reaction which converts lycopene to beta-carotene and neurosporene to beta-zeacarotene. This chain is Lycopene beta cyclase, chloroplastic (LCY1), found in Nicotiana tabacum (Common tobacco).